Reading from the N-terminus, the 156-residue chain is Small ribosomal subunit protein uS7 (156 aa).

It belongs to the universal ribosomal protein uS7 family. Part of the 30S ribosomal subunit. Contacts proteins S9 and S11.

One of the primary rRNA binding proteins, it binds directly to 16S rRNA where it nucleates assembly of the head domain of the 30S subunit. Is located at the subunit interface close to the decoding center, probably blocks exit of the E-site tRNA. In Jannaschia sp. (strain CCS1), this protein is Small ribosomal subunit protein uS7.